Consider the following 248-residue polypeptide: Malonyl-[acyl-carrier protein] O-methyltransferase 2 (248 aa).

It belongs to the methyltransferase superfamily.

The enzyme catalyses malonyl-[ACP] + S-adenosyl-L-methionine = malonyl-[ACP] methyl ester + S-adenosyl-L-homocysteine. It functions in the pathway cofactor biosynthesis; biotin biosynthesis. Its function is as follows. Converts the free carboxyl group of a malonyl-thioester to its methyl ester by transfer of a methyl group from S-adenosyl-L-methionine (SAM). It allows to synthesize pimeloyl-ACP via the fatty acid synthetic pathway. The sequence is that of Malonyl-[acyl-carrier protein] O-methyltransferase 2 from Coxiella burnetii (strain RSA 493 / Nine Mile phase I).